The sequence spans 224 residues: LexA repressor (224 aa).

The segment at residues 31–51 (RAEIAAELGFKSANAAEEHLQ) is a DNA-binding region (H-T-H motif). Active-site for autocatalytic cleavage activity residues include S142 and K179.

This sequence belongs to the peptidase S24 family. Homodimer.

The catalysed reaction is Hydrolysis of Ala-|-Gly bond in repressor LexA.. In terms of biological role, represses a number of genes involved in the response to DNA damage (SOS response), including recA and lexA. In the presence of single-stranded DNA, RecA interacts with LexA causing an autocatalytic cleavage which disrupts the DNA-binding part of LexA, leading to derepression of the SOS regulon and eventually DNA repair. This Verminephrobacter eiseniae (strain EF01-2) protein is LexA repressor.